Reading from the N-terminus, the 67-residue chain is Large ribosomal subunit protein uL29 (67 aa).

This sequence belongs to the universal ribosomal protein uL29 family.

This Rhizorhabdus wittichii (strain DSM 6014 / CCUG 31198 / JCM 15750 / NBRC 105917 / EY 4224 / RW1) (Sphingomonas wittichii) protein is Large ribosomal subunit protein uL29.